A 189-amino-acid chain; its full sequence is Putative lipoprotein LppK (189 aa).

The signal sequence occupies residues 1 to 22; sequence MRRNIRVTLGAATIVAALGLSG. Residue Cys23 is the site of N-palmitoyl cysteine attachment. A lipid anchor (S-diacylglycerol cysteine) is attached at Cys23. 2 disordered regions span residues 26–49 and 166–189; these read PEFKRSSPPAPSLPPVTSSPLEAA and MGNSPDSTPSATSPAPAPSPTPPG. A compositionally biased stretch (low complexity) spans 169–179; it reads SPDSTPSATSP. A compositionally biased stretch (pro residues) spans 180–189; it reads APAPSPTPPG.

It belongs to the MTB12 family.

Its subcellular location is the cell membrane. The protein is Putative lipoprotein LppK (lppK) of Mycobacterium tuberculosis (strain CDC 1551 / Oshkosh).